The chain runs to 80 residues: Putative ankyrin repeat protein RC0877 (80 aa).

An ANK repeat occupies 6 to 46 (SGGIPLHAVAKNVRCTSKDIKDYEIYKLLVSYGADINARVE).

This is Putative ankyrin repeat protein RC0877 from Rickettsia conorii (strain ATCC VR-613 / Malish 7).